The chain runs to 846 residues: Aminopeptidase N (846 aa).

Residues E120 and 252–256 (GAMEN) each bind substrate. Position 288 (H288) interacts with Zn(2+). The active-site Proton acceptor is E289. Zn(2+) is bound by residues H292 and E311.

It belongs to the peptidase M1 family. As to quaternary structure, monomer. It depends on Zn(2+) as a cofactor.

It is found in the cytoplasm. It carries out the reaction Release of an N-terminal amino acid, Xaa-|-Yaa- from a peptide, amide or arylamide. Xaa is preferably Ala, but may be most amino acids including Pro (slow action). When a terminal hydrophobic residue is followed by a prolyl residue, the two may be released as an intact Xaa-Pro dipeptide.. Its function is as follows. Aminopeptidase with broad substrate specificity to several peptides. It has more affinity for oligopeptides than for dipeptides. It plays an essential role in the metabolism, it may be involved in nitrogen supply or protein turnover. This Lactococcus lactis subsp. cremoris (strain MG1363) protein is Aminopeptidase N (pepN).